Here is a 184-residue protein sequence, read N- to C-terminus: tRNA (cytidine(56)-2'-O)-methyltransferase (184 aa).

S-adenosyl-L-methionine contacts are provided by residues Leu87, Gly112–Val116, and Val130–Glu137.

The protein belongs to the aTrm56 family. Homodimer.

The protein resides in the cytoplasm. It carries out the reaction cytidine(56) in tRNA + S-adenosyl-L-methionine = 2'-O-methylcytidine(56) in tRNA + S-adenosyl-L-homocysteine + H(+). Functionally, specifically catalyzes the AdoMet-dependent 2'-O-ribose methylation of cytidine at position 56 in tRNAs. This chain is tRNA (cytidine(56)-2'-O)-methyltransferase, found in Methanocorpusculum labreanum (strain ATCC 43576 / DSM 4855 / Z).